Here is a 133-residue protein sequence, read N- to C-terminus: ATP synthase epsilon chain, chloroplastic (133 aa).

Belongs to the ATPase epsilon chain family. In terms of assembly, F-type ATPases have 2 components, CF(1) - the catalytic core - and CF(0) - the membrane proton channel. CF(1) has five subunits: alpha(3), beta(3), gamma(1), delta(1), epsilon(1). CF(0) has three main subunits: a, b and c.

Its subcellular location is the plastid. The protein localises to the chloroplast thylakoid membrane. Its function is as follows. Produces ATP from ADP in the presence of a proton gradient across the membrane. This Daucus carota (Wild carrot) protein is ATP synthase epsilon chain, chloroplastic.